A 1092-amino-acid polypeptide reads, in one-letter code: Isoleucine--tRNA ligase (1092 aa).

The 'HIGH' region motif lies at 53 to 63 (PFANGLPHYGH). The short motif at 613-617 (KLSKR) is the 'KMSKS' region element. Residue Lys-616 participates in ATP binding.

Belongs to the class-I aminoacyl-tRNA synthetase family. IleS type 2 subfamily. As to quaternary structure, monomer. Zn(2+) serves as cofactor.

The protein localises to the cytoplasm. It carries out the reaction tRNA(Ile) + L-isoleucine + ATP = L-isoleucyl-tRNA(Ile) + AMP + diphosphate. Functionally, catalyzes the attachment of isoleucine to tRNA(Ile). As IleRS can inadvertently accommodate and process structurally similar amino acids such as valine, to avoid such errors it has two additional distinct tRNA(Ile)-dependent editing activities. One activity is designated as 'pretransfer' editing and involves the hydrolysis of activated Val-AMP. The other activity is designated 'posttransfer' editing and involves deacylation of mischarged Val-tRNA(Ile). This Rickettsia africae (strain ESF-5) protein is Isoleucine--tRNA ligase.